Consider the following 287-residue polypeptide: 4-diphosphocytidyl-2-C-methyl-D-erythritol kinase (287 aa).

Lys-22 is a catalytic residue. Residue 102-112 (PAAAGIGGGSS) coordinates ATP. Asp-139 is a catalytic residue.

The protein belongs to the GHMP kinase family. IspE subfamily.

It carries out the reaction 4-CDP-2-C-methyl-D-erythritol + ATP = 4-CDP-2-C-methyl-D-erythritol 2-phosphate + ADP + H(+). The protein operates within isoprenoid biosynthesis; isopentenyl diphosphate biosynthesis via DXP pathway; isopentenyl diphosphate from 1-deoxy-D-xylulose 5-phosphate: step 3/6. Its function is as follows. Catalyzes the phosphorylation of the position 2 hydroxy group of 4-diphosphocytidyl-2C-methyl-D-erythritol. In Dinoroseobacter shibae (strain DSM 16493 / NCIMB 14021 / DFL 12), this protein is 4-diphosphocytidyl-2-C-methyl-D-erythritol kinase.